The primary structure comprises 827 residues: Periplasmic nitrate reductase (827 aa).

A signal peptide (tat-type signal) is located at residues 1 to 32; the sequence is MELNRRDFMKANAAAAAALAAGITLPVKNVYA. The 4Fe-4S Mo/W bis-MGD-type domain occupies 37 to 93; it reads IKWDKAPCRFCGTGCSVLVGTQNGRMVASQGDPDAEVNRGLNCIKGYFLPKIIYGKD. Positions 44, 47, 51, and 79 each coordinate [4Fe-4S] cluster. Residues Lys81, Gln148, Asn173, Cys177, 210-217, 241-245, Met371, Gln375, Asn481, 507-508, Lys530, Asp557, and 717-726 contribute to the Mo-bis(molybdopterin guanine dinucleotide) site; these read WGSNMAEM, STFEH, SD, and TGRVLEHWHS. Position 793 (Phe793) interacts with substrate. 2 residues coordinate Mo-bis(molybdopterin guanine dinucleotide): Asn801 and Lys818.

The protein belongs to the prokaryotic molybdopterin-containing oxidoreductase family. NasA/NapA/NarB subfamily. As to quaternary structure, component of the periplasmic nitrate reductase NapAB complex composed of NapA and NapB. The cofactor is [4Fe-4S] cluster. It depends on Mo-bis(molybdopterin guanine dinucleotide) as a cofactor. Predicted to be exported by the Tat system. The position of the signal peptide cleavage has not been experimentally proven.

It is found in the periplasm. The catalysed reaction is 2 Fe(II)-[cytochrome] + nitrate + 2 H(+) = 2 Fe(III)-[cytochrome] + nitrite + H2O. In terms of biological role, catalytic subunit of the periplasmic nitrate reductase complex NapAB. Receives electrons from NapB and catalyzes the reduction of nitrate to nitrite. The polypeptide is Periplasmic nitrate reductase (Glaesserella parasuis serovar 5 (strain SH0165) (Haemophilus parasuis)).